Here is a 282-residue protein sequence, read N- to C-terminus: Shikimate dehydrogenase (NADP(+)) (282 aa).

Residues 18–20 (SRS) and Thr65 each bind shikimate. Lys69 serves as the catalytic Proton acceptor. Glu81 provides a ligand contact to NADP(+). Shikimate contacts are provided by Asn90 and Asp105. NADP(+) contacts are provided by residues 130–134 (GAGGA), 154–159 (NRTPAR), and Met222. Tyr224 is a binding site for shikimate. Gly245 is an NADP(+) binding site.

Belongs to the shikimate dehydrogenase family. In terms of assembly, homodimer.

The catalysed reaction is shikimate + NADP(+) = 3-dehydroshikimate + NADPH + H(+). It participates in metabolic intermediate biosynthesis; chorismate biosynthesis; chorismate from D-erythrose 4-phosphate and phosphoenolpyruvate: step 4/7. In terms of biological role, involved in the biosynthesis of the chorismate, which leads to the biosynthesis of aromatic amino acids. Catalyzes the reversible NADPH linked reduction of 3-dehydroshikimate (DHSA) to yield shikimate (SA). This chain is Shikimate dehydrogenase (NADP(+)), found in Acidovorax sp. (strain JS42).